Consider the following 763-residue polypeptide: Probable ubiquitin carboxyl-terminal hydrolase MINDY-4 (763 aa).

Ser143 carries the phosphoserine modification. The tract at residues 154–368 is disordered; that stretch reads SSKRSSHKSR…SQPASLRKNQ (215 aa). Positions 180–202 are enriched in basic and acidic residues; the sequence is EKTDKLPMSEPSLDTKRMGEKVR. Ser220 and Ser224 each carry phosphoserine. Polar residues predominate over residues 252 to 261; that stretch reads ELSTHTSTCP. Residues 267-278 are compositionally biased toward low complexity; the sequence is PASSTASTSRSP. The residue at position 296 (Ser296) is a Phosphoserine. Residues 346 to 355 show a composition bias toward basic and acidic residues; that stretch reads TQERPERAFE. A compositionally biased stretch (polar residues) spans 357–368; the sequence is QGSQPASLRKNQ. Cys463 acts as the Nucleophile in catalysis. The active-site Proton acceptor is the His683.

It belongs to the MINDY deubiquitinase family. FAM188 subfamily.

It catalyses the reaction Thiol-dependent hydrolysis of ester, thioester, amide, peptide and isopeptide bonds formed by the C-terminal Gly of ubiquitin (a 76-residue protein attached to proteins as an intracellular targeting signal).. Functionally, probable hydrolase that can remove 'Lys-48'-linked conjugated ubiquitin from proteins. This chain is Probable ubiquitin carboxyl-terminal hydrolase MINDY-4 (MINDY4), found in Bos taurus (Bovine).